A 412-amino-acid chain; its full sequence is Alanyl-tRNA editing protein Aarsd1 (412 aa).

Zn(2+)-binding residues include His-109 and His-113. Ser-174 is subject to Phosphoserine. Zn(2+) is bound by residues Cys-209 and His-213.

It belongs to the class-II aminoacyl-tRNA synthetase family. Alax-L subfamily. Zn(2+) serves as cofactor.

It is found in the cytoplasm. Functionally, functions in trans to edit the amino acid moiety from incorrectly charged Ser-tRNA(Ala). This Mus musculus (Mouse) protein is Alanyl-tRNA editing protein Aarsd1 (Aarsd1).